The sequence spans 578 residues: SWR1 complex bromodomain subunit bdf1 (578 aa).

A compositionally biased stretch (basic and acidic residues) spans 1-18; the sequence is MSSESRENEVKAETKDEI. Disordered stretches follow at residues 1–89, 192–254, and 504–578; these read MSSE…PPPQ, DAEQ…RKNN, and ADSS…SESA. Positions 22-36 are enriched in polar residues; it reads GSPQLNGDNNIQSSD. 2 stretches are compositionally biased toward basic and acidic residues: residues 37 to 52 and 60 to 77; these read GHND…KRDS and LKQE…EPTV. The 107-residue stretch at 84 to 190 folds into the Bromo 1 domain; the sequence is GMPPPQQKYC…EVFERQLKQL (107 aa). Residues 219–242 show a composition bias toward low complexity; that stretch reads NSSVSSTSASVAASTAPKAASPAV. 3 positions are modified to phosphoserine: serine 221, serine 223, and serine 224. Threonine 225 is subject to Phosphothreonine. Phosphoserine occurs at positions 226 and 239. One can recognise a Bromo 2 domain in the interval 251 to 360; that stretch reads RKNNSQMRFC…NVFKEKWEAR (110 aa). One can recognise an NET domain in the interval 430-510; it reads RRDLTKEYGP…KPDADSSEPA (81 aa). Phosphoserine is present on serine 511. A compositionally biased stretch (basic and acidic residues) spans 526–537; that stretch reads VLSETEQAEKIR. Residues 550-563 are compositionally biased toward polar residues; the sequence is TSPTSPESNNAANV. Over residues 566–578 the composition is skewed to acidic residues; the sequence is SESDNESESSESA.

The protein belongs to the BET family. In terms of assembly, component of the SWR1 chromatin-remodeling complex.

The protein localises to the nucleus. In terms of biological role, component of the SWR1 complex which mediates the ATP-dependent exchange of histone H2A for the H2A variant HZT1 leading to transcriptional regulation of selected genes by chromatin remodeling. In Schizosaccharomyces pombe (strain 972 / ATCC 24843) (Fission yeast), this protein is SWR1 complex bromodomain subunit bdf1 (bdf1).